Consider the following 231-residue polypeptide: Large ribosomal subunit protein uL1 (231 aa).

This sequence belongs to the universal ribosomal protein uL1 family. As to quaternary structure, part of the 50S ribosomal subunit.

Functionally, binds directly to 23S rRNA. The L1 stalk is quite mobile in the ribosome, and is involved in E site tRNA release. Protein L1 is also a translational repressor protein, it controls the translation of the L11 operon by binding to its mRNA. The chain is Large ribosomal subunit protein uL1 from Neisseria gonorrhoeae (strain ATCC 700825 / FA 1090).